The primary structure comprises 179 residues: Large ribosomal subunit protein uL5 (179 aa).

This sequence belongs to the universal ribosomal protein uL5 family. As to quaternary structure, part of the 50S ribosomal subunit; part of the 5S rRNA/L5/L18/L25 subcomplex. Contacts the 5S rRNA and the P site tRNA. Forms a bridge to the 30S subunit in the 70S ribosome.

Its function is as follows. This is one of the proteins that bind and probably mediate the attachment of the 5S RNA into the large ribosomal subunit, where it forms part of the central protuberance. In the 70S ribosome it contacts protein S13 of the 30S subunit (bridge B1b), connecting the 2 subunits; this bridge is implicated in subunit movement. Contacts the P site tRNA; the 5S rRNA and some of its associated proteins might help stabilize positioning of ribosome-bound tRNAs. The protein is Large ribosomal subunit protein uL5 of Bacillus velezensis (strain DSM 23117 / BGSC 10A6 / LMG 26770 / FZB42) (Bacillus amyloliquefaciens subsp. plantarum).